The chain runs to 544 residues: Chaperonin GroEL 2 (544 aa).

ATP-binding positions include 29–32 (TLGP), 86–90 (DGTTT), Gly-413, 482–484 (NVL), and Asp-498.

Belongs to the chaperonin (HSP60) family. As to quaternary structure, forms a cylinder of 14 subunits composed of two heptameric rings stacked back-to-back. Interacts with the co-chaperonin GroES.

The protein localises to the cytoplasm. The catalysed reaction is ATP + H2O + a folded polypeptide = ADP + phosphate + an unfolded polypeptide.. In terms of biological role, together with its co-chaperonin GroES, plays an essential role in assisting protein folding. The GroEL-GroES system forms a nano-cage that allows encapsulation of the non-native substrate proteins and provides a physical environment optimized to promote and accelerate protein folding. The chain is Chaperonin GroEL 2 from Roseiflexus sp. (strain RS-1).